The sequence spans 450 residues: Glucose-6-phosphate isomerase (450 aa).

Residue T39 is modified to Phosphothreonine. The active-site Proton donor is the E291. Residues H312 and K426 contribute to the active site.

The protein belongs to the GPI family.

Its subcellular location is the cytoplasm. The catalysed reaction is alpha-D-glucose 6-phosphate = beta-D-fructose 6-phosphate. It participates in carbohydrate biosynthesis; gluconeogenesis. The protein operates within carbohydrate degradation; glycolysis; D-glyceraldehyde 3-phosphate and glycerone phosphate from D-glucose: step 2/4. Its function is as follows. Catalyzes the reversible isomerization of glucose-6-phosphate to fructose-6-phosphate. This Bacillus cereus (strain AH187) protein is Glucose-6-phosphate isomerase.